An 881-amino-acid polypeptide reads, in one-letter code: Valine--tRNA ligase (881 aa).

A 'HIGH' region motif is present at residues 42–52; that stretch reads PNITGDLHVGH. The 'KMSKS' region signature appears at 554 to 558; sequence KMSKS. Residue Lys557 coordinates ATP.

It belongs to the class-I aminoacyl-tRNA synthetase family. ValS type 1 subfamily. Monomer.

Its subcellular location is the cytoplasm. The enzyme catalyses tRNA(Val) + L-valine + ATP = L-valyl-tRNA(Val) + AMP + diphosphate. Its function is as follows. Catalyzes the attachment of valine to tRNA(Val). As ValRS can inadvertently accommodate and process structurally similar amino acids such as threonine, to avoid such errors, it has a 'posttransfer' editing activity that hydrolyzes mischarged Thr-tRNA(Val) in a tRNA-dependent manner. This chain is Valine--tRNA ligase, found in Wigglesworthia glossinidia brevipalpis.